A 120-amino-acid polypeptide reads, in one-letter code: Protein RALF-like 1 (120 aa).

Positions 1-26 (MDKSFTLFLTLTILVVFIISSPPVQA) are cleaved as a signal peptide. Residues 27–71 (GFANDLGGVAWATTGDNGSGCHGSIAECIGAEEEEMDSEINRRIL) constitute a propeptide, removed in mature form. A glycan (N-linked (GlcNAc...) asparagine) is linked at Asn-43. Intrachain disulfides connect Cys-89–Cys-99 and Cys-112–Cys-118.

This sequence belongs to the plant rapid alkalinization factor (RALF) family. In terms of assembly, interacts with FER and promotes its phosphorylation and subsequent activation. Post-translationally, proteolytically cleaved, probably by S1P, a subtilisin-like serine protease (subtilase). Expressed in roots and stems.

It is found in the secreted. Cell signaling peptide that may regulate plant stress, growth, and development. Mediates a rapid alkalinization of extracellular space by mediating a transient increase in the cytoplasmic Ca(2+) concentration leading to a calcium-dependent signaling events through a cell surface receptor and a concomitant activation of some intracellular mitogen-activated protein kinases. Mostly active in roots. Prevents plant growth (e.g. root and leaf length). Suppresses cell elongation of the primary root by activating the cell surface receptor FER and triggering phosphorylation of AHA2 and subsequent extracellular alkalinization. This chain is Protein RALF-like 1 (RALF1), found in Arabidopsis thaliana (Mouse-ear cress).